The primary structure comprises 272 residues: Tryptophan synthase alpha chain (272 aa).

Residues glutamate 53 and aspartate 64 each act as proton acceptor in the active site.

This sequence belongs to the TrpA family. As to quaternary structure, tetramer of two alpha and two beta chains.

It catalyses the reaction (1S,2R)-1-C-(indol-3-yl)glycerol 3-phosphate + L-serine = D-glyceraldehyde 3-phosphate + L-tryptophan + H2O. Its pathway is amino-acid biosynthesis; L-tryptophan biosynthesis; L-tryptophan from chorismate: step 5/5. Its function is as follows. The alpha subunit is responsible for the aldol cleavage of indoleglycerol phosphate to indole and glyceraldehyde 3-phosphate. This is Tryptophan synthase alpha chain from Xanthomonas campestris pv. campestris (strain B100).